Here is a 432-residue protein sequence, read N- to C-terminus: Probable exopolygalacturonase C (432 aa).

The N-terminal stretch at 1–20 (MPISKGIFLSLLSTLPLALA) is a signal peptide. N-linked (GlcNAc...) asparagine glycosylation is found at Asn-33, Asn-73, Asn-90, and Asn-140. PbH1 repeat units follow at residues 206-227 (GTNI…AVGS) and 229-250 (SHDI…SIGS). The active-site Proton donor is the Asp-220. His-244 is a catalytic residue. A glycan (N-linked (GlcNAc...) asparagine) is linked at Asn-260. The PbH1 3 repeat unit spans residues 261–282 (ITNLRFEDVTVIDALYAARFKS). Asn-292 and Asn-302 each carry an N-linked (GlcNAc...) asparagine glycan. Cysteines 377 and 383 form a disulfide. Asn-407 carries N-linked (GlcNAc...) asparagine glycosylation.

Belongs to the glycosyl hydrolase 28 family.

The protein localises to the secreted. The catalysed reaction is [(1-&gt;4)-alpha-D-galacturonosyl](n) + H2O = alpha-D-galacturonate + [(1-&gt;4)-alpha-D-galacturonosyl](n-1). In terms of biological role, specific in hydrolyzing the terminal glycosidic bond of polygalacturonic acid and oligogalacturonates. The chain is Probable exopolygalacturonase C (pgxC) from Aspergillus terreus (strain NIH 2624 / FGSC A1156).